Here is a 283-residue protein sequence, read N- to C-terminus: Polyamine aminopropyltransferase (283 aa).

The PABS domain occupies 5 to 238; that stretch reads TTWIDEYHKG…GIWSWTFASS (234 aa). Glutamine 32 is an S-methyl-5'-thioadenosine binding site. Spermidine contacts are provided by histidine 63 and aspartate 87. Residues glutamate 107 and 139–140 contribute to the S-methyl-5'-thioadenosine site; that span reads DG. The Proton acceptor role is filled by aspartate 158. Position 158–161 (158–161) interacts with spermidine; that stretch reads DCSD.

Belongs to the spermidine/spermine synthase family. In terms of assembly, homodimer or homotetramer.

Its subcellular location is the cytoplasm. The enzyme catalyses S-adenosyl 3-(methylsulfanyl)propylamine + putrescine = S-methyl-5'-thioadenosine + spermidine + H(+). Its pathway is amine and polyamine biosynthesis; spermidine biosynthesis; spermidine from putrescine: step 1/1. Its function is as follows. Catalyzes the irreversible transfer of a propylamine group from the amino donor S-adenosylmethioninamine (decarboxy-AdoMet) to putrescine (1,4-diaminobutane) to yield spermidine. The protein is Polyamine aminopropyltransferase of Prochlorococcus marinus (strain AS9601).